Reading from the N-terminus, the 472-residue chain is GTPase Der (472 aa).

2 consecutive EngA-type G domains span residues 3–166 (PIIA…IQNN) and 188–361 (IKLA…HCST). GTP-binding positions include 9 to 16 (GRPNVGKS), 56 to 60 (DTGGI), 118 to 121 (NKID), 194 to 201 (GSSNVGKS), 241 to 245 (DTAGL), and 306 to 309 (NKWD). Residues 362–446 (KRISTALLTK…PIRIQFNEPA (85 aa)) form the KH-like domain.

This sequence belongs to the TRAFAC class TrmE-Era-EngA-EngB-Septin-like GTPase superfamily. EngA (Der) GTPase family. Associates with the 50S ribosomal subunit.

GTPase that plays an essential role in the late steps of ribosome biogenesis. The chain is GTPase Der from Baumannia cicadellinicola subsp. Homalodisca coagulata.